A 385-amino-acid polypeptide reads, in one-letter code: Putative transport protein MT1133 (385 aa).

The next 8 helical transmembrane spans lie at 7–27, 32–52, 66–86, 159–179, 218–238, 241–261, 263–283, and 319–339; these read LTQKRALAILTLIALLFGAYF, FVLIVVAAVGAYLFTPLFKWF, LLSALAAVVVPVGALVGLAIV, SLAGVITSAIIFVYVFVALLV, FVIAACQGVAGAASIYIAGFH, FFIFAIVLTALSIIPLGGGIV, IPFGIGMIFYGNIAGGIFVLL, and GITMFGPWGIIIGPVLMILIV.

The protein belongs to the autoinducer-2 exporter (AI-2E) (TC 2.A.86) family.

Its subcellular location is the cell membrane. The sequence is that of Putative transport protein MT1133 from Mycobacterium tuberculosis (strain CDC 1551 / Oshkosh).